A 596-amino-acid chain; its full sequence is Fructan 1-exohydrolase (596 aa).

The signal sequence occupies residues 1 to 20 (MAQAWAFLLPVLVLGSYVTS). D75 is a catalytic residue. Residues N168, N236, and N248 are each glycosylated (N-linked (GlcNAc...) asparagine). Cysteines 446 and 492 form a disulfide. N-linked (GlcNAc...) asparagine glycosylation is present at N567.

Belongs to the glycosyl hydrolase 32 family.

It catalyses the reaction Hydrolysis of terminal, non-reducing (2-&gt;1)-linked beta-D-fructofuranose residues in fructans.. Its activity is regulated as follows. Inhibited by sucrose. In terms of biological role, hydrolyzes inulin-type beta-(2,1)-fructans. May play a role as a beta-(2,1)-trimmer during graminan biosynthesis. The polypeptide is Fructan 1-exohydrolase (Aegilops tauschii (Tausch's goatgrass)).